We begin with the raw amino-acid sequence, 195 residues long: Guanylate kinase (195 aa).

One can recognise a Guanylate kinase-like domain in the interval 7 to 186; sequence GVLLVLSSPS…SVEEISSILD (180 aa). 14-21 contacts ATP; the sequence is SPSGAGKT.

Belongs to the guanylate kinase family.

It localises to the cytoplasm. It catalyses the reaction GMP + ATP = GDP + ADP. Functionally, essential for recycling GMP and indirectly, cGMP. This Wolbachia sp. subsp. Brugia malayi (strain TRS) protein is Guanylate kinase.